The chain runs to 158 residues: MKFGCLSFRQPYAGFVLNGIKTVETRWRPLLSSQRNCTIAVHIAHRDWEGDACRELLVERLGMTPAQIQALLRKGEKFGRGVIAGLVDIGETLQCPEDLTPDEVVELENQAALTNLKQKYLTVISNPRWLLEPIPRKGGKDVFQVDIPEHLIPLGHEV.

Residues 6 to 92 enclose the ASCH domain; the sequence is LSFRQPYAGF…IAGLVDIGET (87 aa).

It belongs to the EOLA family.

In Homo sapiens (Human), this protein is Protein EOLA2.